A 188-amino-acid polypeptide reads, in one-letter code: Kininogen (188 aa).

Asparagine 36, asparagine 150, and asparagine 182 each carry an N-linked (GlcNAc...) asparagine glycan.

Bradykinin is released from kininogen by kallikrein. In terms of processing, N-glycosylated. Contains O-acetylated sialic acids as terminal elements on biantennary and triantennary N-glycans.

In terms of biological role, inhibits papain and ficin (cysteine proteinases) but not trypsin (a serine proteinase). The polypeptide is Kininogen (Anarhichas minor (Arctic spotted wolffish)).